Consider the following 480-residue polypeptide: Cysteine--tRNA ligase (480 aa).

Position 29 (cysteine 29) interacts with Zn(2+). The 'HIGH' region signature appears at 31–41 (PTVYSDPHLGH). The Zn(2+) site is built by cysteine 220, histidine 245, and glutamate 249. A 'KMSKS' region motif is present at residues 276–280 (KMAKS). Lysine 279 lines the ATP pocket.

This sequence belongs to the class-I aminoacyl-tRNA synthetase family. As to quaternary structure, monomer. Zn(2+) is required as a cofactor.

It is found in the cytoplasm. It carries out the reaction tRNA(Cys) + L-cysteine + ATP = L-cysteinyl-tRNA(Cys) + AMP + diphosphate. The chain is Cysteine--tRNA ligase from Thermus thermophilus (strain ATCC BAA-163 / DSM 7039 / HB27).